The chain runs to 373 residues: Dual-specificity RNA methyltransferase RlmN (373 aa).

The active-site Proton acceptor is glutamate 94. The Radical SAM core domain maps to 100–339 (EDDRATLCVS…VIVRKTRGDD (240 aa)). An intrachain disulfide couples cysteine 107 to cysteine 344. [4Fe-4S] cluster is bound by residues cysteine 114, cysteine 118, and cysteine 121. S-adenosyl-L-methionine is bound by residues 168–169 (GE), serine 200, 222–224 (SIH), and asparagine 301. Catalysis depends on cysteine 344, which acts as the S-methylcysteine intermediate.

Belongs to the radical SAM superfamily. RlmN family. [4Fe-4S] cluster serves as cofactor.

It localises to the cytoplasm. The enzyme catalyses adenosine(2503) in 23S rRNA + 2 reduced [2Fe-2S]-[ferredoxin] + 2 S-adenosyl-L-methionine = 2-methyladenosine(2503) in 23S rRNA + 5'-deoxyadenosine + L-methionine + 2 oxidized [2Fe-2S]-[ferredoxin] + S-adenosyl-L-homocysteine. It catalyses the reaction adenosine(37) in tRNA + 2 reduced [2Fe-2S]-[ferredoxin] + 2 S-adenosyl-L-methionine = 2-methyladenosine(37) in tRNA + 5'-deoxyadenosine + L-methionine + 2 oxidized [2Fe-2S]-[ferredoxin] + S-adenosyl-L-homocysteine. Its function is as follows. Specifically methylates position 2 of adenine 2503 in 23S rRNA and position 2 of adenine 37 in tRNAs. m2A2503 modification seems to play a crucial role in the proofreading step occurring at the peptidyl transferase center and thus would serve to optimize ribosomal fidelity. The chain is Dual-specificity RNA methyltransferase RlmN from Shewanella pealeana (strain ATCC 700345 / ANG-SQ1).